Consider the following 239-residue polypeptide: tRNA (guanine-N(7)-)-methyltransferase (239 aa).

S-adenosyl-L-methionine contacts are provided by Glu68, Glu93, Asp120, and Asp143. Residue Asp143 is part of the active site. Substrate is bound by residues Lys147, Asp180, and 217–220 (TKFE).

Belongs to the class I-like SAM-binding methyltransferase superfamily. TrmB family.

The catalysed reaction is guanosine(46) in tRNA + S-adenosyl-L-methionine = N(7)-methylguanosine(46) in tRNA + S-adenosyl-L-homocysteine. It functions in the pathway tRNA modification; N(7)-methylguanine-tRNA biosynthesis. Its function is as follows. Catalyzes the formation of N(7)-methylguanine at position 46 (m7G46) in tRNA. The polypeptide is tRNA (guanine-N(7)-)-methyltransferase (Vibrio vulnificus (strain CMCP6)).